The primary structure comprises 441 residues: ATP-dependent protease ATPase subunit HslU (441 aa).

ATP-binding positions include I18 and 60–65 (GVGKTE). A disordered region spans residues 131-158 (ILDALLPRPRGSEYDHARDESSTRQTFR). The span at 140–152 (RGSEYDHARDESS) shows a compositional bias: basic and acidic residues. ATP contacts are provided by D254, E320, and R392.

This sequence belongs to the ClpX chaperone family. HslU subfamily. As to quaternary structure, a double ring-shaped homohexamer of HslV is capped on each side by a ring-shaped HslU homohexamer. The assembly of the HslU/HslV complex is dependent on binding of ATP.

It localises to the cytoplasm. Functionally, ATPase subunit of a proteasome-like degradation complex; this subunit has chaperone activity. The binding of ATP and its subsequent hydrolysis by HslU are essential for unfolding of protein substrates subsequently hydrolyzed by HslV. HslU recognizes the N-terminal part of its protein substrates and unfolds these before they are guided to HslV for hydrolysis. In Chromohalobacter salexigens (strain ATCC BAA-138 / DSM 3043 / CIP 106854 / NCIMB 13768 / 1H11), this protein is ATP-dependent protease ATPase subunit HslU.